The sequence spans 509 residues: Dihydrolipoyl dehydrogenase, mitochondrial (509 aa).

A mitochondrion-targeting transit peptide spans 1–35 (MQSWSRVYCSLAKRGHFNRISHGLQGLSAVPLRTY). Lys-66 carries the post-translational modification N6-acetyllysine; alternate. Lys-66 carries the post-translational modification N6-succinyllysine; alternate. FAD contacts are provided by residues 71–80 (EKNETLGGTC) and Lys-89. A disulfide bridge connects residues Cys-80 and Cys-85. Residues Lys-104, Lys-122, Lys-132, and Lys-143 each carry the N6-acetyllysine; alternate modification. Residues Lys-104, Lys-122, Lys-132, and Lys-143 each carry the N6-succinyllysine; alternate modification. Gly-154 is a binding site for FAD. 2 positions are modified to N6-succinyllysine: Lys-159 and Lys-166. Residue 183 to 185 (TGS) participates in FAD binding. NAD(+)-binding positions include 220 to 227 (GAGVIGVE) and Glu-243. N6-succinyllysine is present on residues Lys-273 and Lys-277. Position 278 (Val-278) interacts with NAD(+). A phosphoserine mark is found at Ser-285 and Ser-297. Gly-314 is a binding site for NAD(+). Residue Lys-346 is modified to N6-acetyllysine. Residues Asp-355 and 361–364 (MLAH) contribute to the FAD site. Lys-410 is subject to N6-acetyllysine; alternate. Lys-410 is modified (N6-succinyllysine; alternate). 2 positions are modified to N6-acetyllysine: Lys-417 and Lys-420. Lys-430 carries the N6-succinyllysine modification. The Proton acceptor role is filled by His-487. Residue Ser-502 is modified to Phosphoserine. Lys-505 carries the post-translational modification N6-acetyllysine; alternate. Lys-505 carries the post-translational modification N6-succinyllysine; alternate.

The protein belongs to the class-I pyridine nucleotide-disulfide oxidoreductase family. As to quaternary structure, homodimer. Part of the multimeric pyruvate dehydrogenase complex that contains multiple copies of pyruvate dehydrogenase (subunits PDHA (PDHA1 or PDHA2) and PDHB, E1), dihydrolipoamide acetyltransferase (DLAT, E2) and lipoamide dehydrogenase (DLD, E3). These subunits are bound to an inner core composed of about 48 DLAT and 12 PDHX molecules (by non covalent bonds). The 2-oxoglutarate dehydrogenase complex is composed of OGDH (2-oxoglutarate dehydrogenase; E1), DLST (dihydrolipoamide succinyltransferase; E2), DLD (dihydrolipoamide dehydrogenase; E3) and the assembly factor KGD4. It contains multiple copies of the three enzymatic components (E1, E2 and E3). In the nucleus, the 2-oxoglutarate dehydrogenase complex associates with KAT2A. Interacts with PDHX. FAD is required as a cofactor. Post-translationally, tyrosine phosphorylated.

It is found in the mitochondrion matrix. Its subcellular location is the nucleus. The protein localises to the cell projection. The protein resides in the cilium. It localises to the flagellum. It is found in the cytoplasmic vesicle. Its subcellular location is the secretory vesicle. The protein localises to the acrosome. The enzyme catalyses N(6)-[(R)-dihydrolipoyl]-L-lysyl-[protein] + NAD(+) = N(6)-[(R)-lipoyl]-L-lysyl-[protein] + NADH + H(+). Functionally, lipoamide dehydrogenase is a component of the glycine cleavage system as well as an E3 component of three alpha-ketoacid dehydrogenase complexes (pyruvate-, alpha-ketoglutarate-, and branched-chain amino acid-dehydrogenase complex). The 2-oxoglutarate dehydrogenase complex is mainly active in the mitochondrion. A fraction of the 2-oxoglutarate dehydrogenase complex also localizes in the nucleus and is required for lysine succinylation of histones: associates with KAT2A on chromatin and provides succinyl-CoA to histone succinyltransferase KAT2A. In monomeric form may have additional moonlighting function as serine protease. Involved in the hyperactivation of spermatazoa during capacitation and in the spermatazoal acrosome reaction. The chain is Dihydrolipoyl dehydrogenase, mitochondrial (DLD) from Pongo abelii (Sumatran orangutan).